The chain runs to 211 residues: Uracil phosphoribosyltransferase (211 aa).

Residues arginine 77, arginine 102, and 129-137 (DPMLATGGS) each bind 5-phospho-alpha-D-ribose 1-diphosphate. Uracil is bound by residues isoleucine 192 and 197-199 (GDA). Aspartate 198 is a 5-phospho-alpha-D-ribose 1-diphosphate binding site.

The protein belongs to the UPRTase family. Requires Mg(2+) as cofactor.

It carries out the reaction UMP + diphosphate = 5-phospho-alpha-D-ribose 1-diphosphate + uracil. It participates in pyrimidine metabolism; UMP biosynthesis via salvage pathway; UMP from uracil: step 1/1. Its activity is regulated as follows. Allosterically activated by GTP. Functionally, catalyzes the conversion of uracil and 5-phospho-alpha-D-ribose 1-diphosphate (PRPP) to UMP and diphosphate. This Corynebacterium efficiens (strain DSM 44549 / YS-314 / AJ 12310 / JCM 11189 / NBRC 100395) protein is Uracil phosphoribosyltransferase.